Reading from the N-terminus, the 282-residue chain is Bifunctional protein FolD (282 aa).

Residues 164 to 166 (GRS) and serine 189 contribute to the NADP(+) site.

The protein belongs to the tetrahydrofolate dehydrogenase/cyclohydrolase family. As to quaternary structure, homodimer.

It catalyses the reaction (6R)-5,10-methylene-5,6,7,8-tetrahydrofolate + NADP(+) = (6R)-5,10-methenyltetrahydrofolate + NADPH. It carries out the reaction (6R)-5,10-methenyltetrahydrofolate + H2O = (6R)-10-formyltetrahydrofolate + H(+). Its pathway is one-carbon metabolism; tetrahydrofolate interconversion. In terms of biological role, catalyzes the oxidation of 5,10-methylenetetrahydrofolate to 5,10-methenyltetrahydrofolate and then the hydrolysis of 5,10-methenyltetrahydrofolate to 10-formyltetrahydrofolate. This Anaeromyxobacter dehalogenans (strain 2CP-C) protein is Bifunctional protein FolD.